We begin with the raw amino-acid sequence, 96 residues long: Protein S100-A10 (96 aa).

Residues Asp-62 to Ser-73 are ancestral calcium site.

This sequence belongs to the S-100 family. As to quaternary structure, tetramer of 2 light chains (p10) and 2 heavy chains (annexin II).

Functionally, because p10 induces the dimerization of annexin II (p36), it may function as a regulator of protein phosphorylation in that the p36 monomer is the preferred target (in vitro) of tyrosine-specific kinase. The polypeptide is Protein S100-A10 (s100a10) (Xenopus laevis (African clawed frog)).